A 641-amino-acid chain; its full sequence is Probable ATP-dependent helicase YpvA (641 aa).

The region spanning Tyr29–Leu303 is the Helicase ATP-binding domain. Ala64–Thr71 is an ATP binding site. The [4Fe-4S] cluster site is built by Cys133, Cys197, Cys200, and Cys206. The short motif at Asp257–His260 is the DEGH box element.

It belongs to the helicase family. DinG subfamily. Requires [4Fe-4S] cluster as cofactor.

It catalyses the reaction Couples ATP hydrolysis with the unwinding of duplex DNA at the replication fork by translocating in the 5'-3' direction. This creates two antiparallel DNA single strands (ssDNA). The leading ssDNA polymer is the template for DNA polymerase III holoenzyme which synthesizes a continuous strand.. The enzyme catalyses ATP + H2O = ADP + phosphate + H(+). In terms of biological role, might be a 5'-3' DNA helicase. This Bacillus subtilis (strain 168) protein is Probable ATP-dependent helicase YpvA (ypvA).